We begin with the raw amino-acid sequence, 340 residues long: Ferredoxin--NADP reductase (340 aa).

T20, D39, Q47, Y52, V92, F126, D293, and T334 together coordinate FAD.

This sequence belongs to the ferredoxin--NADP reductase type 2 family. As to quaternary structure, homodimer. The cofactor is FAD.

The enzyme catalyses 2 reduced [2Fe-2S]-[ferredoxin] + NADP(+) + H(+) = 2 oxidized [2Fe-2S]-[ferredoxin] + NADPH. This chain is Ferredoxin--NADP reductase, found in Gluconobacter oxydans (strain 621H) (Gluconobacter suboxydans).